Consider the following 369-residue polypeptide: MAVKISLVDLAQNIGAELHGDKNILITHVSSIKNAQVGHITFLKNSRFREQLKSCAASAVILSQDNLSFCRVSALVVKNPYLAYVKVAQLLDSSPKLNANIKSQSVIHSNSILGKDVGIGYNVIIESGVIISDNVKIESGCIIGKNVKIGIGTYLWSNVTVYHGVEIGEYCIIQSGSIIGSDGFGYIKNDGVWIKIPQLGKVSIGNNVEIGSCTTIDRGTLDDTCIGDGVIIDNQCQIAHNVAIGSHTAIAGGVIIAGSVVIGKSCMIGGASVINGHIRICDKVTITGMSMVMKSITTSGIYSSGIPVQPNFAWRRTAALVMRIHSIDKRIKDIEQKVNCFFYIVIVGFFIVLGLTGLFPLIYFFVKQG.

The Proton acceptor role is filled by His240.

Belongs to the transferase hexapeptide repeat family. LpxD subfamily. As to quaternary structure, homotrimer.

It carries out the reaction a UDP-3-O-[(3R)-3-hydroxyacyl]-alpha-D-glucosamine + a (3R)-hydroxyacyl-[ACP] = a UDP-2-N,3-O-bis[(3R)-3-hydroxyacyl]-alpha-D-glucosamine + holo-[ACP] + H(+). The enzyme catalyses UDP-3-O-[(3R)-3-hydroxytetradecanoyl]-alpha-D-glucosamine + (3R)-hydroxytetradecanoyl-[ACP] = UDP-2-N,3-O-bis[(3R)-3-hydroxytetradecanoyl]-alpha-D-glucosamine + holo-[ACP] + H(+). It participates in glycolipid biosynthesis; lipid IV(A) biosynthesis; lipid IV(A) from (3R)-3-hydroxytetradecanoyl-[acyl-carrier-protein] and UDP-N-acetyl-alpha-D-glucosamine: step 3/6. Functionally, catalyzes the N-acylation of UDP-3-O-(hydroxytetradecanoyl)glucosamine using 3-hydroxytetradecanoyl-ACP as the acyl donor. Is involved in the biosynthesis of lipid A, a phosphorylated glycolipid that anchors the lipopolysaccharide to the outer membrane of the cell. The sequence is that of UDP-3-O-(3-hydroxymyristoyl)glucosamine N-acyltransferase from Blochmanniella floridana.